We begin with the raw amino-acid sequence, 165 residues long: Phosphopantetheine adenylyltransferase (165 aa).

S9 lines the substrate pocket. Residues 9–10 (SF) and H17 each bind ATP. Substrate is bound by residues K41, V73, and R87. Residues 88 to 90 (GLR), E98, and 123 to 129 (FTLLSSS) each bind ATP.

Belongs to the bacterial CoaD family. As to quaternary structure, homohexamer. Mg(2+) serves as cofactor.

Its subcellular location is the cytoplasm. It catalyses the reaction (R)-4'-phosphopantetheine + ATP + H(+) = 3'-dephospho-CoA + diphosphate. It functions in the pathway cofactor biosynthesis; coenzyme A biosynthesis; CoA from (R)-pantothenate: step 4/5. Its function is as follows. Reversibly transfers an adenylyl group from ATP to 4'-phosphopantetheine, yielding dephospho-CoA (dPCoA) and pyrophosphate. The protein is Phosphopantetheine adenylyltransferase of Herpetosiphon aurantiacus (strain ATCC 23779 / DSM 785 / 114-95).